Reading from the N-terminus, the 28-residue chain is Cruzioseptin-4 (28 aa).

At E25 the chain carries Glutamic acid 1-amide. The propeptide occupies 27-28 (EH).

As to expression, expressed by the skin glands.

The protein resides in the secreted. Its function is as follows. Has antimicrobial activity. This is Cruzioseptin-4 from Cruziohyla calcarifer (Splendid leaf frog).